The primary structure comprises 711 residues: Putative membrane protein ActII-3 (711 aa).

A run of 12 helical transmembrane segments spans residues 14-34 (LKWLVLAAWIGLLIVLQPLAG), 175-195 (ADFKLTLVTLLIVVTILVVTY), 199-219 (LLWLLPMISAGMSLVISQAIV), 235-255 (AMILTVLVLGAATDYALLLVA), 281-301 (AIVASAATVAVSMLVLLLAAL), 313-333 (VGVLVGLLSMMTLLPALLVIF), 369-389 (AVWVTTSLLLGAVATLAVTLN), 516-536 (IIPVILAVVFCILALLLRALV), 540-560 (LLIASVVLSFFTALGLAALFF), 573-593 (FPLWVFVFLVALGVDYNIFLV), 623-643 (AGLVLAGTFAALATLPLVFIA), and 645-665 (LGFTVAVGVLLDTMIVRSVLV). The interval 685 to 711 (REDPSEDPAVSGMPDSIDSEASTTASR) is disordered.

Belongs to the resistance-nodulation-cell division (RND) (TC 2.A.6) family. MmpL subfamily.

It is found in the cell membrane. This chain is Putative membrane protein ActII-3 (actII-3), found in Streptomyces coelicolor (strain ATCC BAA-471 / A3(2) / M145).